We begin with the raw amino-acid sequence, 471 residues long: MTPTGTQHSLAGQTYAVPLIQPDLRREEAIQQVADALQYLQKVSGDIFSRISQRVELSRSQLQAIGERVSLAQAKIEKIKGSKKAIKVFSSAKYPAPERLQEYGSIFMGAQDPGLQRRPRHRIQSKHRPLDERALQEKLKFFPVCVNTKPEPEDEAEEGLGGLPSNISSVSSLLLFNTTENLYKKYVFLDPLAGAVTKTHVMLGAETEEKLFDAPLSISRREQLERQVPENYFYVPDLGQVPDIDVPSYLPDLPGVADDLMYSADLGPGIAPSAPGAIPELPTFHTEVAQPFKPDLEDGVLTARPPPPPPPPPPPAPAVLMSVPPPPPPPQAPPGQPAKGDDSGGASPSAPVQGAPKEVVDPSSGRATLLESIRQAGGIGKAKLRSVKERKLEKKKQKEQEQVRATSQGGDLMSDLFNKLAMRRKGISGKGPGSGASEGPGGAFARMSDSIPPLPPPQQPPGEEDEDDWES.

The required for WASH complex assembly stretch occupies residues 1-54 (MTPTGTQHSLAGQTYAVPLIQPDLRREEAIQQVADALQYLQKVSGDIFSRISQR). The WHD1 stretch occupies residues 1–167 (MTPTGTQHSL…EGLGGLPSNI (167 aa)). The disordered stretch occupies residues 297 to 471 (EDGVLTARPP…GEEDEDDWES (175 aa)). Residues 304–336 (RPPPPPPPPPPPAPAVLMSVPPPPPPPQAPPGQ) show a composition bias toward pro residues. The tract at residues 353–471 (QGAPKEVVDP…GEEDEDDWES (119 aa)) is VCA. Residues 365–387 (GRATLLESIRQAGGIGKAKLRSV) enclose the WH2 domain. Over residues 386–402 (SVKERKLEKKKQKEQEQ) the composition is skewed to basic and acidic residues. Residues 428-442 (SGKGPGSGASEGPGG) show a composition bias toward gly residues. Acidic residues predominate over residues 462 to 471 (GEEDEDDWES).

This sequence belongs to the WASH1 family. Component of the WASH core complex also described as WASH regulatory complex SHRC composed of WASHC1, WASHC2, WASHC3, WASHC4 and WASHC5. The WASH core complex associates with the F-actin-capping protein dimer (formed by CAPZA1, CAPZA2 or CAPZA3 and CAPZB); the assembly has been initially described as WASH complex. Interacts (via WHD1 region) with WASHC2; the interaction is direct. Interacts with alpha-tubulin. Interacts with BECN1; WASHC1 and AMBRA1 can competitively interact with BECN1. Interacts with BLOC1S2; may associate with the BLOC-1 complex. Interacts with tubulin gamma chain (TUBG1 or TUBG2). Interacts with TBC1D23.

It localises to the early endosome membrane. The protein localises to the recycling endosome membrane. Its subcellular location is the late endosome. The protein resides in the cytoplasmic vesicle. It is found in the autophagosome. It localises to the cytoplasm. The protein localises to the cytoskeleton. Its subcellular location is the microtubule organizing center. The protein resides in the centrosome. It is found in the centriole. Acts as a component of the WASH core complex that functions as a nucleation-promoting factor (NPF) at the surface of endosomes, where it recruits and activates the Arp2/3 complex to induce actin polymerization, playing a key role in the fission of tubules that serve as transport intermediates during endosome sorting. Involved in endocytic trafficking of EGF. Involved in transferrin receptor recycling. Regulates the trafficking of endosomal alpha5beta1 integrin to the plasma membrane and involved in invasive cell migration. In T-cells involved in endosome-to-membrane recycling of receptors including T-cell receptor (TCR), CD28 and ITGAL; proposed to be implicated in T-cell proliferation and effector function. In dendritic cells involved in endosome-to-membrane recycling of major histocompatibility complex (MHC) class II probably involving retromer and subsequently allowing antigen sampling, loading and presentation during T-cell activation. Involved in negative regulation of autophagy independently from its role in endosomal sorting by inhibiting BECN1 ubiquitination to inactivate PIK3C3/Vps34 activity. This is WASH complex subunit 1 from Bos taurus (Bovine).